A 333-amino-acid polypeptide reads, in one-letter code: tRNA dimethylallyltransferase (333 aa).

An ATP-binding site is contributed by 23-30; sequence GPTGAGKT. 25–30 is a binding site for substrate; it reads TGAGKT. Interaction with substrate tRNA regions lie at residues 53-56 and 177-181; these read DSAL and QRVQR.

Belongs to the IPP transferase family. As to quaternary structure, monomer. The cofactor is Mg(2+).

The catalysed reaction is adenosine(37) in tRNA + dimethylallyl diphosphate = N(6)-dimethylallyladenosine(37) in tRNA + diphosphate. Functionally, catalyzes the transfer of a dimethylallyl group onto the adenine at position 37 in tRNAs that read codons beginning with uridine, leading to the formation of N6-(dimethylallyl)adenosine (i(6)A). The chain is tRNA dimethylallyltransferase from Polynucleobacter asymbioticus (strain DSM 18221 / CIP 109841 / QLW-P1DMWA-1) (Polynucleobacter necessarius subsp. asymbioticus).